We begin with the raw amino-acid sequence, 332 residues long: Lipoyl synthase (332 aa).

Positions 55, 60, 66, 81, 85, 88, and 292 each coordinate [4Fe-4S] cluster. Residues 67-281 form the Radical SAM core domain; sequence WEDREATFLI…SDEAERIGFL (215 aa).

The protein belongs to the radical SAM superfamily. Lipoyl synthase family. [4Fe-4S] cluster is required as a cofactor.

The protein resides in the cytoplasm. It catalyses the reaction [[Fe-S] cluster scaffold protein carrying a second [4Fe-4S](2+) cluster] + N(6)-octanoyl-L-lysyl-[protein] + 2 oxidized [2Fe-2S]-[ferredoxin] + 2 S-adenosyl-L-methionine + 4 H(+) = [[Fe-S] cluster scaffold protein] + N(6)-[(R)-dihydrolipoyl]-L-lysyl-[protein] + 4 Fe(3+) + 2 hydrogen sulfide + 2 5'-deoxyadenosine + 2 L-methionine + 2 reduced [2Fe-2S]-[ferredoxin]. It functions in the pathway protein modification; protein lipoylation via endogenous pathway; protein N(6)-(lipoyl)lysine from octanoyl-[acyl-carrier-protein]: step 2/2. Functionally, catalyzes the radical-mediated insertion of two sulfur atoms into the C-6 and C-8 positions of the octanoyl moiety bound to the lipoyl domains of lipoate-dependent enzymes, thereby converting the octanoylated domains into lipoylated derivatives. This is Lipoyl synthase from Beutenbergia cavernae (strain ATCC BAA-8 / DSM 12333 / CCUG 43141 / JCM 11478 / NBRC 16432 / NCIMB 13614 / HKI 0122).